A 427-amino-acid polypeptide reads, in one-letter code: 3-phosphoshikimate 1-carboxyvinyltransferase (427 aa).

Residues Lys-22, Ser-23, and Arg-27 each contribute to the 3-phosphoshikimate site. Residue Lys-22 participates in phosphoenolpyruvate binding. Phosphoenolpyruvate contacts are provided by Gly-96 and Arg-124. Residues Ser-169, Ser-170, Gln-171, Ser-197, Asp-313, Asn-336, and Lys-340 each coordinate 3-phosphoshikimate. Phosphoenolpyruvate is bound at residue Gln-171. The active-site Proton acceptor is Asp-313. The phosphoenolpyruvate site is built by Arg-344, Arg-386, and Lys-411.

It belongs to the EPSP synthase family. As to quaternary structure, monomer.

It localises to the cytoplasm. It catalyses the reaction 3-phosphoshikimate + phosphoenolpyruvate = 5-O-(1-carboxyvinyl)-3-phosphoshikimate + phosphate. It participates in metabolic intermediate biosynthesis; chorismate biosynthesis; chorismate from D-erythrose 4-phosphate and phosphoenolpyruvate: step 6/7. Catalyzes the transfer of the enolpyruvyl moiety of phosphoenolpyruvate (PEP) to the 5-hydroxyl of shikimate-3-phosphate (S3P) to produce enolpyruvyl shikimate-3-phosphate and inorganic phosphate. This Shigella sonnei protein is 3-phosphoshikimate 1-carboxyvinyltransferase.